The chain runs to 250 residues: Aliphatic sulfonates import ATP-binding protein SsuB 2 (250 aa).

In terms of domain architecture, ABC transporter spans 13-229 (VRLQGLTRSF…SYRDPLLGEY (217 aa)). 45-52 (GHSGSGKS) contributes to the ATP binding site.

It belongs to the ABC transporter superfamily. Aliphatic sulfonates importer (TC 3.A.1.17.2) family. As to quaternary structure, the complex is composed of two ATP-binding proteins (SsuB), two transmembrane proteins (SsuC) and a solute-binding protein (SsuA).

Its subcellular location is the cell membrane. The enzyme catalyses ATP + H2O + aliphatic sulfonate-[sulfonate-binding protein]Side 1 = ADP + phosphate + aliphatic sulfonateSide 2 + [sulfonate-binding protein]Side 1.. Its function is as follows. Part of the ABC transporter complex SsuABC involved in aliphatic sulfonates import. Responsible for energy coupling to the transport system. This is Aliphatic sulfonates import ATP-binding protein SsuB 2 from Streptomyces avermitilis (strain ATCC 31267 / DSM 46492 / JCM 5070 / NBRC 14893 / NCIMB 12804 / NRRL 8165 / MA-4680).